The following is a 372-amino-acid chain: Adaptive-response sensory kinase SasA (372 aa).

The 214-residue stretch at 147–360 (MVAHELRTPL…CFHFTVPVWQ (214 aa)) folds into the Histidine kinase domain. Phosphohistidine; by autocatalysis is present on H150.

As to quaternary structure, homooligomerizes. Interacts with KaiC. Participates in the KaiBC complex, whose core is composed of a KaiC homohexamer and 6 KaiB.

The catalysed reaction is ATP + protein L-histidine = ADP + protein N-phospho-L-histidine.. Functionally, member of the two-component regulatory system SasA/RpaA involved in genome-wide circadian gene expression. One of several clock output pathways. Participates in the Kai clock protein complex, the main circadian regulator in cyanobacteria, via its interaction with KaiC. KaiC enhances the autophosphorylation activity of SasA, which then transfers its phosphate group to RpaA to activate it. In addition to its output function, recruits fold-shifted KaiB (KaiB(fs)) to KaiC to cooperatively form the KaiB(6):KaiC(6) complex (independent of SasA kinase activity). Required for robustness of the circadian rhythm of gene expression and is involved in clock output, also required for adaptation to light/dark cycles. The protein is Adaptive-response sensory kinase SasA of Prochlorococcus marinus (strain MIT 9215).